The following is a 131-amino-acid chain: Small ribosomal subunit protein eS24 (131 aa).

M1 carries the post-translational modification N-acetylmethionine. T9 carries the phosphothreonine modification. Residue K37 forms a Glycyl lysine isopeptide (Lys-Gly) (interchain with G-Cter in SUMO2) linkage. Positions 90-100 (RLARHGLYEKK) are enriched in basic and acidic residues. The tract at residues 90–131 (RLARHGLYEKKKTSRKQRKERKNRMKKVRGTAKANVGAGKKK) is disordered. A compositionally biased stretch (basic residues) spans 101–119 (KTSRKQRKERKNRMKKVRG).

It belongs to the eukaryotic ribosomal protein eS24 family. In terms of assembly, component of the small ribosomal subunit. Part of the small subunit (SSU) processome, composed of more than 70 proteins and the RNA chaperone small nucleolar RNA (snoRNA) U3.

It localises to the cytoplasm. The protein resides in the nucleus. It is found in the nucleolus. Its function is as follows. Component of the small ribosomal subunit. The ribosome is a large ribonucleoprotein complex responsible for the synthesis of proteins in the cell. Required for processing of pre-rRNA and maturation of 40S ribosomal subunits. Part of the small subunit (SSU) processome, first precursor of the small eukaryotic ribosomal subunit. During the assembly of the SSU processome in the nucleolus, many ribosome biogenesis factors, an RNA chaperone and ribosomal proteins associate with the nascent pre-rRNA and work in concert to generate RNA folding, modifications, rearrangements and cleavage as well as targeted degradation of pre-ribosomal RNA by the RNA exosome. This Macaca fascicularis (Crab-eating macaque) protein is Small ribosomal subunit protein eS24 (RPS24).